Here is a 133-residue protein sequence, read N- to C-terminus: Transmembrane protein 60 (133 aa).

4 helical membrane-spanning segments follow: residues 5–25 (LAQR…MLVL), 35–55 (WFLI…MLIV), 78–98 (AWYL…CAKL), and 110–130 (FIPL…NVFF).

It localises to the membrane. In Mus musculus (Mouse), this protein is Transmembrane protein 60 (Tmem60).